A 584-amino-acid polypeptide reads, in one-letter code: Proline--tRNA ligase (584 aa).

It belongs to the class-II aminoacyl-tRNA synthetase family. ProS type 1 subfamily. In terms of assembly, homodimer.

Its subcellular location is the cytoplasm. It carries out the reaction tRNA(Pro) + L-proline + ATP = L-prolyl-tRNA(Pro) + AMP + diphosphate. In terms of biological role, catalyzes the attachment of proline to tRNA(Pro) in a two-step reaction: proline is first activated by ATP to form Pro-AMP and then transferred to the acceptor end of tRNA(Pro). As ProRS can inadvertently accommodate and process non-cognate amino acids such as alanine and cysteine, to avoid such errors it has two additional distinct editing activities against alanine. One activity is designated as 'pretransfer' editing and involves the tRNA(Pro)-independent hydrolysis of activated Ala-AMP. The other activity is designated 'posttransfer' editing and involves deacylation of mischarged Ala-tRNA(Pro). The misacylated Cys-tRNA(Pro) is not edited by ProRS. The polypeptide is Proline--tRNA ligase (Mycobacterium sp. (strain KMS)).